We begin with the raw amino-acid sequence, 319 residues long: Alpha/beta-gliadin A-V (319 aa).

A signal peptide spans 1-20 (MKTFLILALLAIVATTATTA). Residues 28–58 (LQPQNPSQQQPQEQVPLVQQQQFPGQQQQFP) show a composition bias toward low complexity. 2 disordered regions span residues 28 to 125 (LQPQ…QQAQ) and 258 to 278 (SQVS…VQPQ). 2 stretches are compositionally biased toward pro residues: residues 59-71 (PQQP…PFPS) and 81-104 (FPQP…PQQP). Low complexity predominate over residues 105-125 (YPQQQPQYLQPQQPISQQQAQ). Residues 267–278 (LNPQAQGSVQPQ) are compositionally biased toward polar residues.

It belongs to the gliadin/glutenin family. In terms of processing, substrate of transglutaminase.

In terms of biological role, gliadin is the major seed storage protein in wheat. The protein is Alpha/beta-gliadin A-V of Triticum aestivum (Wheat).